The following is a 313-amino-acid chain: GDP-D-glycero-alpha-D-manno-heptose dehydrogenase (313 aa).

NADH is bound by residues 13–14, 33–39, Phe-37, 57–58, Leu-77, and 144–148; these read YI, DNLMFDQ, DA, and YGIDK. Thr-168 is a GDP binding site. NADH contacts are provided by residues Val-169 and 175-177; that span reads RMR. GDP is bound by residues 179 to 184, 196 to 198, Arg-204, Lys-242, and Arg-270; these read DLLVND and VLF. NADH is bound at residue Asn-311.

In terms of assembly, homotetramer. NAD(+) is required as a cofactor.

It catalyses the reaction GDP-D-glycero-alpha-D-manno-heptose + 2-oxoglutarate = GDP-D-glycero-4-keto-alpha-D-lyxo-heptose + (S)-2-hydroxyglutarate. Its pathway is capsule biogenesis; capsule polysaccharide biosynthesis. NAD-dependent dehydrogenase involved in the biosynthesis of heptose moieties with a hydroxyl group at C6 found on the capsular polysaccharide (CPS) of C.jejuni. Catalyzes the initial oxidation of C4 of the GDP-D-glycero-alpha-D-manno-heptose to form GDP-D-glycero-4-keto-alpha-D-lyxo-heptose in the presence of alpha-ketoglutarate required to recycle the NADH nucleotide. The chain is GDP-D-glycero-alpha-D-manno-heptose dehydrogenase from Campylobacter jejuni subsp. jejuni serotype O:2 (strain ATCC 700819 / NCTC 11168).